The primary structure comprises 66 residues: Ribosome biogenesis protein Nop10 (66 aa).

This sequence belongs to the NOP10 family.

Functionally, involved in ribosome biogenesis; more specifically in 18S rRNA pseudouridylation and in cleavage of pre-rRNA. This Staphylothermus marinus (strain ATCC 43588 / DSM 3639 / JCM 9404 / F1) protein is Ribosome biogenesis protein Nop10.